The sequence spans 216 residues: Transmembrane emp24 domain-containing protein p24delta5 (216 aa).

The N-terminal stretch at 1–27 (MAINRIAHGSLFLTVVLFFLTVNYGEA) is a signal peptide. At 28 to 183 (IWLTIPTTGG…REVSETTNSR (156 aa)) the chain is on the lumenal side. The 114-residue stretch at 38–151 (TKCVSEEIQS…IEGVELQLRR (114 aa)) folds into the GOLD domain. The N-linked (GlcNAc...) asparagine glycan is linked to asparagine 86. Residues 137-159 (AKKEKIEGVELQLRRLEGLVLSI) are a coiled coil. Residues arginine 169 and arginine 174 each carry the omega-N-methylated arginine modification. A helical transmembrane segment spans residues 184-204 (VAWFSIMSLGVCVVVVGSQIL). Residues 205–216 (YLKRYFHKKKLI) lie on the Cytoplasmic side of the membrane. Positions 209–210 (YF) match the COPII vesicle coat-binding motif. Residues 209–216 (YFHKKKLI) carry the COPI vesicle coat-binding motif.

Belongs to the EMP24/GP25L family. In terms of assembly, probably oligomerizes with other members of the EMP24/GP25L family. Associates with the COPI vesicle coat (coatomer). Associates with the COPII vesicle coat (coatomer). Interacts with p24beta2.

The protein resides in the endoplasmic reticulum membrane. Functionally, involved in vesicular protein trafficking. Mainly functions in the early secretory pathway. Thought to act as cargo receptor at the lumenal side for incorporation of secretory cargo molecules into transport vesicles and to be involved in vesicle coat formation at the cytoplasmic side. Interacts with p24beta2 at endoplasmic reticulum export sites for endoplasmic reticulum exit and coupled transport to the Golgi apparatus. Once in the Golgi, interacts very efficiently with the COPI machinery for retrograde transport back to the endoplasmic reticulum. The protein is Transmembrane emp24 domain-containing protein p24delta5 of Arabidopsis thaliana (Mouse-ear cress).